The chain runs to 665 residues: MTITRHAQIDWDEHGNPRSRDFSDVYFSTESGLEETRHVFLVQNDLRRRFTELQDGGRLIIGETGFGTGLNFLCAWQLFDECAPANARLQFVSVEKYPLSHADLQRALALWPELSPFAGQLLDQYVAVHEGFQRLVFAGGRVTLTLLIGDALQMLPQLDGQMDAWFLDGFAPAKNPEMWTPELFAELARLSTSSTTIGTFTSTGWVRRSLNAAGFKMKRVPGIGHKWEVLRGTFIAWPEDVAHPPAAKPWLARPAPIGGERKALVIGAGLAGCATAQSLAQRGWQVSLLERHAAPAQEASGNPQGVLYLKLSAHGTALSQLILSGFGHTRRLLERLQRGVDWDACGVLQLTFDDKEALRQKQLADAFPESLLHLLDKPAAEAQSGVALNSGGLFYPEGGWVHPPALCHAQAAHANIRLIAHQQALELRRVDDQWQVWSEEQLVDSAPVVVLAGAADIQQFSQSADLPLKRIRGQITRLPQTQASTALRSVVCAEGYVAPARLGEHTLGASFDFNSTDLTPNLADHLDNLGLLREISEDLTSRLDTADLSPEQLQGRAAFRCTSPDYLPIVGPLADREAFMQAYAALGKDARQVPDITCPWLDGLYVNSGHGSRGLITAPLCGELIAAWLDNEPLPLPRSVAEACHPNRFALRGLIRGKGKQTVGH.

A tRNA (mnm(5)s(2)U34)-methyltransferase region spans residues methionine 1 to isoleucine 235. Positions isoleucine 266 to histidine 665 are FAD-dependent cmnm(5)s(2)U34 oxidoreductase.

It in the N-terminal section; belongs to the methyltransferase superfamily. tRNA (mnm(5)s(2)U34)-methyltransferase family. In the C-terminal section; belongs to the DAO family. Requires FAD as cofactor.

The protein resides in the cytoplasm. It catalyses the reaction 5-aminomethyl-2-thiouridine(34) in tRNA + S-adenosyl-L-methionine = 5-methylaminomethyl-2-thiouridine(34) in tRNA + S-adenosyl-L-homocysteine + H(+). Catalyzes the last two steps in the biosynthesis of 5-methylaminomethyl-2-thiouridine (mnm(5)s(2)U) at the wobble position (U34) in tRNA. Catalyzes the FAD-dependent demodification of cmnm(5)s(2)U34 to nm(5)s(2)U34, followed by the transfer of a methyl group from S-adenosyl-L-methionine to nm(5)s(2)U34, to form mnm(5)s(2)U34. The protein is tRNA 5-methylaminomethyl-2-thiouridine biosynthesis bifunctional protein MnmC of Pseudomonas syringae pv. syringae (strain B728a).